An 84-amino-acid polypeptide reads, in one-letter code: Large ribosomal subunit protein bL27 (84 aa).

Belongs to the bacterial ribosomal protein bL27 family.

The polypeptide is Large ribosomal subunit protein bL27 (Buchnera aphidicola subsp. Acyrthosiphon pisum (strain Tuc7)).